Here is a 296-residue protein sequence, read N- to C-terminus: 33 kDa chaperonin (296 aa).

2 disulfides stabilise this stretch: C233/C235 and C267/C270.

Belongs to the HSP33 family. In terms of processing, under oxidizing conditions two disulfide bonds are formed involving the reactive cysteines. Under reducing conditions zinc is bound to the reactive cysteines and the protein is inactive.

It localises to the cytoplasm. In terms of biological role, redox regulated molecular chaperone. Protects both thermally unfolding and oxidatively damaged proteins from irreversible aggregation. Plays an important role in the bacterial defense system toward oxidative stress. The chain is 33 kDa chaperonin from Actinobacillus pleuropneumoniae serotype 7 (strain AP76).